The chain runs to 426 residues: uncharacterized protein (426 aa).

Solcar repeat units follow at residues 125 to 216 (KNNV…MKRV), 226 to 315 (HSPL…LKRT), and 334 to 422 (PNGL…CKKW). A run of 6 helical transmembrane segments spans residues 130-151 (YFIS…LDRL), 193-213 (GINV…YEAM), 229-249 (LYSY…IYPV), 290-310 (GVLV…GTFE), 336-356 (GLVM…VFPL), and 394-415 (LYKG…SYLV).

It belongs to the mitochondrial carrier (TC 2.A.29) family.

It localises to the mitochondrion inner membrane. This is an uncharacterized protein from Schizosaccharomyces pombe (strain 972 / ATCC 24843) (Fission yeast).